The sequence spans 554 residues: Transcription factor 7-like 1-A (554 aa).

The segment covering Met1 to Glu11 has biased composition (gly residues). Residues Met1–Ser61 are interaction with CTNNB1-A. Disordered regions lie at residues Met1 to Phe73, Gly183 to Pro213, and Trp391 to Lys475. Basic and acidic residues-rich tracts occupy residues Glu17–Pro32 and Ser52–Phe73. Positions Leu109–Met312 are interaction with AES and TLE4-A. The HMG box DNA-binding region spans Ile324–Ser392. Basic and acidic residues predominate over residues Lys407–Thr416. Residues Gln408 to Asp554 are interaction with CTBP-B. Residues Ser445 to Ser464 are compositionally biased toward low complexity. Residues Glu465–Thr474 are compositionally biased toward polar residues.

Belongs to the TCF/LEF family. In terms of assembly, interacts with csnk1e, ctnnb1-A, ctbp-B, dact1-A and gsk3b. May interact with ase and tle4-A. In terms of processing, phosphorylated. Phosphorylation by csnk1e promotes binding to ctnnb1-A while phosphorylation by gsk3b may reverse this effect.

Its subcellular location is the cytoplasm. It localises to the nucleus. In terms of biological role, participates in the Wnt signaling pathway. Binds to DNA and acts as a repressor in the absence of ctnnb1-A and possibly ctnnb1-B, and as an activator in the presence of these proteins. Required early in development for the establishment of the dorsal body axis in response to maternal Wnt signaling. Also required during development of the CNS for the establishment of dorsal-ventral patterning in the prospective diencephalon. In Xenopus laevis (African clawed frog), this protein is Transcription factor 7-like 1-A (tcf7l1-a).